The primary structure comprises 192 residues: MEYSSLTLDDFLSRFQLLRPQINRETLNHRQAAVLIPIVRRPQPGLLLTQRSIHLRKHAGQVAFPGGAVDDTDTSVIAAALREAEEEVAIPPSSVEVIGVLPPVDSVTGYQVTPVVGIIPPDLPYHASEDEVSAVFEMPLAQALHLGRYHPLDIYRRGDSHRVWLSWYEHYFVWGMTAGIIRELALQIGVKP.

One can recognise a Nudix hydrolase domain in the interval 29–160 (HRQAAVLIPI…PLDIYRRGDS (132 aa)). Positions 67–89 (GAVDDTDTSVIAAALREAEEEVA) match the Nudix box motif. Positions 83 and 87 each coordinate Mg(2+).

This sequence belongs to the Nudix hydrolase family. PCD1 subfamily. Mn(2+) is required as a cofactor. Mg(2+) serves as cofactor.

Functionally, probably mediates the hydrolysis of some nucleoside diphosphate derivatives. This is an uncharacterized protein from Escherichia fergusonii (strain ATCC 35469 / DSM 13698 / CCUG 18766 / IAM 14443 / JCM 21226 / LMG 7866 / NBRC 102419 / NCTC 12128 / CDC 0568-73).